A 178-amino-acid polypeptide reads, in one-letter code: MGLELVTSGKNLPEEINVVIEIPKDSEPVKYEVDKASGAIFVDRILSTPMRYPCNYGYVPNTLCGDGDPADVLVVLPLPLVPGSVVRCRPVGVLRMSDEAGSDEKILAVPIEKIFSGYAHIEDINQVSSHWMERIGHFFEHYKDLEKGKWVKLDGWGGAAEAKRILTESVERYNSDAP.

Residues K30, R44, and Y56 each contribute to the substrate site. 3 residues coordinate Mg(2+): D66, D71, and D103. Y142 is a substrate binding site.

Belongs to the PPase family. In terms of assembly, homohexamer. It depends on Mg(2+) as a cofactor.

Its subcellular location is the cytoplasm. The catalysed reaction is diphosphate + H2O = 2 phosphate + H(+). Functionally, catalyzes the hydrolysis of inorganic pyrophosphate (PPi) forming two phosphate ions. This Xanthomonas axonopodis pv. citri (strain 306) protein is Inorganic pyrophosphatase.